The sequence spans 204 residues: Recombination protein RecR (204 aa).

Residues 58 to 75 (CSICQNITDLGTDPCLLC) form a C4-type zinc finger. A Toprim domain is found at 83–181 (SVICVVESPT…NVTRIARGIP (99 aa)).

Belongs to the RecR family.

Functionally, may play a role in DNA repair. It seems to be involved in an RecBC-independent recombinational process of DNA repair. It may act with RecF and RecO. The sequence is that of Recombination protein RecR from Chlorobaculum parvum (strain DSM 263 / NCIMB 8327) (Chlorobium vibrioforme subsp. thiosulfatophilum).